The following is a 621-amino-acid chain: (-)-beta-phellandrene synthase 1, chloroplastic (621 aa).

The transit peptide at 1–49 (MALALVSVAPLVSMRRSLFSSPYELKSIDKTIPNLVMCRKRMLGRPSIR) directs the protein to the chloroplast. Mg(2+)-binding residues include aspartate 372, aspartate 376, and aspartate 524. Positions 372–376 (DDIYD) match the DDXXD motif motif.

Belongs to the terpene synthase family. Tpsd subfamily. The cofactor is Mg(2+). Mn(2+) is required as a cofactor.

It localises to the plastid. Its subcellular location is the chloroplast. The catalysed reaction is (2E)-geranyl diphosphate = (-)-beta-phellandrene + diphosphate. Its pathway is terpene metabolism; oleoresin biosynthesis. The protein operates within secondary metabolite biosynthesis; terpenoid biosynthesis. Functionally, monoterpene synthase (TPS) involved in the biosynthesis of monoterpene natural products included in conifer oleoresin secretions and volatile emissions; these compounds contribute to biotic and abiotic stress defense against herbivores and pathogens. Catalyzes the conversion of (2E)-geranyl diphosphate (GPP) to (-)-beta-phellandrene. The sequence is that of (-)-beta-phellandrene synthase 1, chloroplastic from Pinus banksiana (Jack pine).